Consider the following 420-residue polypeptide: MLDLKYIRANPEKVQEGLSKRNKDVSIAPILELDERRRKLLAEVESLKALQNQKSKEVPKLKKEGKDVTDLMNELKDLSDKIKELDSKVKEVEDEIEKILLTIPNIPHESVPVGKDDTENVEVRRWGEVREPDFEIKPHWEIGVNLGILDFERASKVSGSRFTFYRGLGARLERALINFMLDLHIEKHGYTELFPPFLVARKSMIGTGQLPKFEEDAFKTTDDYFLIPTAEVPVTNYHREEILKEEDLPIKYVAYSACFRAEAGAAGKDTRGLIRQHQFNKVELVKFTKPEDSYDELEKLTADAEDVLKELGLPYRVVLLCSGDLGFSSAKTYDIEVWMPSYGRYVEISSCSNFENYQARRANIRFRRKDGKLDYVHTLNGSGLAVGRTLAAILENFQQKDGTVVVPEVLRKYMGTDVIK.

229-231 (TAE) contacts L-serine. Position 260-262 (260-262 (RAE)) interacts with ATP. Position 283 (E283) interacts with L-serine. Residue 347–350 (EISS) participates in ATP binding. An L-serine-binding site is contributed by S382.

It belongs to the class-II aminoacyl-tRNA synthetase family. Type-1 seryl-tRNA synthetase subfamily. In terms of assembly, homodimer. The tRNA molecule binds across the dimer.

The protein resides in the cytoplasm. The enzyme catalyses tRNA(Ser) + L-serine + ATP = L-seryl-tRNA(Ser) + AMP + diphosphate + H(+). It carries out the reaction tRNA(Sec) + L-serine + ATP = L-seryl-tRNA(Sec) + AMP + diphosphate + H(+). Its pathway is aminoacyl-tRNA biosynthesis; selenocysteinyl-tRNA(Sec) biosynthesis; L-seryl-tRNA(Sec) from L-serine and tRNA(Sec): step 1/1. Catalyzes the attachment of serine to tRNA(Ser). Is also able to aminoacylate tRNA(Sec) with serine, to form the misacylated tRNA L-seryl-tRNA(Sec), which will be further converted into selenocysteinyl-tRNA(Sec). The chain is Serine--tRNA ligase from Caldicellulosiruptor bescii (strain ATCC BAA-1888 / DSM 6725 / KCTC 15123 / Z-1320) (Anaerocellum thermophilum).